The chain runs to 236 residues: tRNA (guanine-N(7)-)-methyltransferase (236 aa).

A disordered region spans residues 1–23; sequence MEADVQRAQQAQLEKGSSVPPWT. S-adenosyl-L-methionine is bound by residues Asp69, Glu94, Asn121, and Asp144. Residue Asp144 is part of the active site. Lys148 and Asp180 together coordinate substrate.

It belongs to the class I-like SAM-binding methyltransferase superfamily. TrmB family.

It carries out the reaction guanosine(46) in tRNA + S-adenosyl-L-methionine = N(7)-methylguanosine(46) in tRNA + S-adenosyl-L-homocysteine. It participates in tRNA modification; N(7)-methylguanine-tRNA biosynthesis. Catalyzes the formation of N(7)-methylguanine at position 46 (m7G46) in tRNA. This chain is tRNA (guanine-N(7)-)-methyltransferase, found in Synechococcus sp. (strain JA-3-3Ab) (Cyanobacteria bacterium Yellowstone A-Prime).